Here is a 78-residue protein sequence, read N- to C-terminus: Acyl carrier protein (78 aa).

The Carrier domain occupies 2-77 (SSIEERVKKI…QATSYVEANL (76 aa)). At Ser37 the chain carries O-(pantetheine 4'-phosphoryl)serine.

This sequence belongs to the acyl carrier protein (ACP) family. In terms of processing, 4'-phosphopantetheine is transferred from CoA to a specific serine of apo-ACP by AcpS. This modification is essential for activity because fatty acids are bound in thioester linkage to the sulfhydryl of the prosthetic group.

The protein resides in the cytoplasm. It participates in lipid metabolism; fatty acid biosynthesis. Its function is as follows. Carrier of the growing fatty acid chain in fatty acid biosynthesis. The polypeptide is Acyl carrier protein (Hydrogenovibrio crunogenus (strain DSM 25203 / XCL-2) (Thiomicrospira crunogena)).